Consider the following 178-residue polypeptide: Bifunctional protein PyrR (178 aa).

A PRPP-binding motif is present at residues 99–111; sequence VVLVDDVIFKGRT.

The protein belongs to the purine/pyrimidine phosphoribosyltransferase family. PyrR subfamily.

The enzyme catalyses UMP + diphosphate = 5-phospho-alpha-D-ribose 1-diphosphate + uracil. Regulates the transcription of the pyrimidine nucleotide (pyr) operon in response to exogenous pyrimidines. Functionally, also displays a weak uracil phosphoribosyltransferase activity which is not physiologically significant. In Nostoc punctiforme (strain ATCC 29133 / PCC 73102), this protein is Bifunctional protein PyrR.